The primary structure comprises 151 residues: Large ribosomal subunit protein bL9 (151 aa).

Belongs to the bacterial ribosomal protein bL9 family.

Functionally, binds to the 23S rRNA. The polypeptide is Large ribosomal subunit protein bL9 (Nitrosospira multiformis (strain ATCC 25196 / NCIMB 11849 / C 71)).